The chain runs to 635 residues: Interferon-induced GTP-binding protein Mx2 (635 aa).

The Dynamin-type G domain occupies 31 to 304 (DLALPAIAVI…LVQHIEKSMP (274 aa)). The G1 motif stretch occupies residues 41–48 (GDQSSGKS). Residue 41-48 (GDQSSGKS) participates in GTP binding. The segment at 66–68 (VTR) is G2 motif. A G3 motif region spans residues 142 to 145 (DLPG). GTP contacts are provided by residues 142–146 (DLPGI) and 211–214 (TKPD). Residues 211–214 (TKPD) form a G4 motif region. The interval 243–246 (KCRG) is G5 motif. In terms of domain architecture, GED spans 549–635 (LREMMLHLKS…MKAHNYLVEF (87 aa)).

This sequence belongs to the TRAFAC class dynamin-like GTPase superfamily. Dynamin/Fzo/YdjA family.

It is found in the nucleus. It localises to the cytoplasm. Functionally, does not inhibit strain RB-1 of the fish pathogen, infectious hematopoietic necrosis virus (IHNV). This is Interferon-induced GTP-binding protein Mx2 from Oncorhynchus mykiss (Rainbow trout).